The chain runs to 193 residues: Cyanate hydratase (193 aa).

Catalysis depends on residues arginine 121, glutamate 124, and serine 147.

The protein belongs to the cyanase family.

It catalyses the reaction cyanate + hydrogencarbonate + 3 H(+) = NH4(+) + 2 CO2. In terms of biological role, catalyzes the reaction of cyanate with bicarbonate to produce ammonia and carbon dioxide. The polypeptide is Cyanate hydratase (Phaeodactylum tricornutum (strain CCAP 1055/1)).